Consider the following 438-residue polypeptide: 3-phosphoshikimate 1-carboxyvinyltransferase (438 aa).

Lys-21 lines the phosphoenolpyruvate pocket. Residues Ser-22 and Arg-26 each contribute to the 3-phosphoshikimate site. Residues 93–96 (NSGT) are phosphoenolpyruvate. Gly-95, Thr-96, and Arg-123 together coordinate phosphoenolpyruvate. Residues Ser-167, Ala-168, Gln-169, Asp-315, and Lys-342 each contribute to the 3-phosphoshikimate site. Position 169 (Gln-169) interacts with phosphoenolpyruvate. Asp-315 functions as the Proton acceptor in the catalytic mechanism. The phosphoenolpyruvate site is built by Arg-346 and Arg-387.

Belongs to the EPSP synthase family. Homodimer or homotetramer.

It is found in the cytoplasm. It catalyses the reaction 3-phosphoshikimate + phosphoenolpyruvate = 5-O-(1-carboxyvinyl)-3-phosphoshikimate + phosphate. It functions in the pathway metabolic intermediate biosynthesis; chorismate biosynthesis; chorismate from D-erythrose 4-phosphate and phosphoenolpyruvate: step 6/7. Its function is as follows. Catalyzes the transfer of the enolpyruvyl moiety of phosphoenolpyruvate (PEP) to the 5-hydroxyl of shikimate-3-phosphate (S3P) to produce enolpyruvyl shikimate-3-phosphate and inorganic phosphate. The polypeptide is 3-phosphoshikimate 1-carboxyvinyltransferase (Coxiella burnetii (strain RSA 493 / Nine Mile phase I)).